Reading from the N-terminus, the 390-residue chain is Leu/Ile/Val-binding protein homolog 6 (390 aa).

The signal sequence occupies residues 1–21; it reads MKKIALTALAVFSLAASAAYA.

The protein belongs to the leucine-binding protein family.

Functionally, component of an amino-acid transport system. The chain is Leu/Ile/Val-binding protein homolog 6 from Brucella suis biovar 1 (strain 1330).